Reading from the N-terminus, the 202-residue chain is Small ribosomal subunit protein uS4 (202 aa).

Residues 91-157 (CRLDNVVYRA…TPFIVARETH (67 aa)) form the S4 RNA-binding domain.

Belongs to the universal ribosomal protein uS4 family. As to quaternary structure, part of the 30S ribosomal subunit. Contacts protein S5. The interaction surface between S4 and S5 is involved in control of translational fidelity.

Functionally, one of the primary rRNA binding proteins, it binds directly to 16S rRNA where it nucleates assembly of the body of the 30S subunit. Its function is as follows. With S5 and S12 plays an important role in translational accuracy. In Nocardioides sp. (strain ATCC BAA-499 / JS614), this protein is Small ribosomal subunit protein uS4.